The following is a 356-amino-acid chain: S-adenosylmethionine:tRNA ribosyltransferase-isomerase (356 aa).

This sequence belongs to the QueA family. Monomer.

The protein resides in the cytoplasm. The enzyme catalyses 7-aminomethyl-7-carbaguanosine(34) in tRNA + S-adenosyl-L-methionine = epoxyqueuosine(34) in tRNA + adenine + L-methionine + 2 H(+). The protein operates within tRNA modification; tRNA-queuosine biosynthesis. In terms of biological role, transfers and isomerizes the ribose moiety from AdoMet to the 7-aminomethyl group of 7-deazaguanine (preQ1-tRNA) to give epoxyqueuosine (oQ-tRNA). The sequence is that of S-adenosylmethionine:tRNA ribosyltransferase-isomerase from Escherichia coli O6:K15:H31 (strain 536 / UPEC).